The primary structure comprises 305 residues: Acetaldehyde dehydrogenase (305 aa).

Residue S12–I15 coordinates NAD(+). C127 functions as the Acyl-thioester intermediate in the catalytic mechanism. Residues S158–N166 and N277 each bind NAD(+).

This sequence belongs to the acetaldehyde dehydrogenase family.

The catalysed reaction is acetaldehyde + NAD(+) + CoA = acetyl-CoA + NADH + H(+). The sequence is that of Acetaldehyde dehydrogenase from Mycolicibacterium paratuberculosis (strain ATCC BAA-968 / K-10) (Mycobacterium paratuberculosis).